The primary structure comprises 336 residues: Fructokinase-2 (336 aa).

Belongs to the carbohydrate kinase PfkB family. Expressed in stem, sheaths, anthers, and panicles (at protein level).

It catalyses the reaction D-fructose + ATP = D-fructose 6-phosphate + ADP + H(+). Its pathway is glycan biosynthesis; starch biosynthesis. With respect to regulation, strongly inhibited at high fructose concentration. In terms of biological role, may play an important role in maintaining the flux of carbon towards starch formation in endosperm. May also be involved in a sugar-sensing pathway. This chain is Fructokinase-2 (FRK2), found in Oryza sativa subsp. japonica (Rice).